A 310-amino-acid chain; its full sequence is GPN-loop GTPase 2 (310 aa).

Alanine 2 is modified (N-acetylalanine). 19–24 (GSGKTT) lines the GTP pocket. The Gly-Pro-Asn (GPN)-loop; involved in dimer interface motif lies at 76-78 (GPN). 178 to 181 (SKMD) lines the GTP pocket.

It belongs to the GPN-loop GTPase family. In terms of assembly, heterodimers with GPN1 or GPN3. Binds to RNA polymerase II (RNAPII).

Functionally, small GTPase required for proper localization of RNA polymerase II and III (RNAPII and RNAPIII). May act at an RNAP assembly step prior to nuclear import. This is GPN-loop GTPase 2 (GPN2) from Bos taurus (Bovine).